The primary structure comprises 679 residues: Methionine--tRNA ligase (679 aa).

Residues 15–25 (PYANGPIHLGH) carry the 'HIGH' region motif. Cys146, Cys149, Cys159, and Cys162 together coordinate Zn(2+). The short motif at 332-336 (KMSKS) is the 'KMSKS' region element. ATP is bound at residue Lys335. The 102-residue stretch at 578 to 679 (DFAKIDLRIA…EGAQPGMKVK (102 aa)) folds into the tRNA-binding domain.

The protein belongs to the class-I aminoacyl-tRNA synthetase family. MetG type 1 subfamily. Homodimer. It depends on Zn(2+) as a cofactor.

The protein localises to the cytoplasm. It catalyses the reaction tRNA(Met) + L-methionine + ATP = L-methionyl-tRNA(Met) + AMP + diphosphate. Its function is as follows. Is required not only for elongation of protein synthesis but also for the initiation of all mRNA translation through initiator tRNA(fMet) aminoacylation. This Shewanella halifaxensis (strain HAW-EB4) protein is Methionine--tRNA ligase.